The primary structure comprises 103 residues: uncharacterized protein (103 aa).

The protein localises to the plastid. It localises to the chloroplast. This is an uncharacterized protein from Auxenochlorella pyrenoidosa (Freshwater green alga).